Here is a 129-residue protein sequence, read N- to C-terminus: Large ribosomal subunit protein bL12 (129 aa).

The segment at 94-113 is disordered; that stretch reads TEGLPKTVKEKTSKSDAEDT.

It belongs to the bacterial ribosomal protein bL12 family. As to quaternary structure, homodimer. Part of the ribosomal stalk of the 50S ribosomal subunit. Forms a multimeric L10(L12)X complex, where L10 forms an elongated spine to which 2 to 4 L12 dimers bind in a sequential fashion. Binds GTP-bound translation factors.

Its function is as follows. Forms part of the ribosomal stalk which helps the ribosome interact with GTP-bound translation factors. Is thus essential for accurate translation. The polypeptide is Large ribosomal subunit protein bL12 (Chlamydia pneumoniae (Chlamydophila pneumoniae)).